The sequence spans 313 residues: Biotin synthase (313 aa).

In terms of domain architecture, Radical SAM core spans Asn-28–Ser-258. 3 residues coordinate [4Fe-4S] cluster: Cys-46, Cys-50, and Cys-53. 4 residues coordinate [2Fe-2S] cluster: Cys-90, Cys-121, Cys-181, and Arg-256.

The protein belongs to the radical SAM superfamily. Biotin synthase family. In terms of assembly, homodimer. [4Fe-4S] cluster serves as cofactor. Requires [2Fe-2S] cluster as cofactor.

It carries out the reaction (4R,5S)-dethiobiotin + (sulfur carrier)-SH + 2 reduced [2Fe-2S]-[ferredoxin] + 2 S-adenosyl-L-methionine = (sulfur carrier)-H + biotin + 2 5'-deoxyadenosine + 2 L-methionine + 2 oxidized [2Fe-2S]-[ferredoxin]. It functions in the pathway cofactor biosynthesis; biotin biosynthesis; biotin from 7,8-diaminononanoate: step 2/2. In terms of biological role, catalyzes the conversion of dethiobiotin (DTB) to biotin by the insertion of a sulfur atom into dethiobiotin via a radical-based mechanism. This chain is Biotin synthase, found in Francisella tularensis subsp. holarctica (strain FTNF002-00 / FTA).